We begin with the raw amino-acid sequence, 170 residues long: Probable Brix domain-containing ribosomal biogenesis protein (170 aa).

Residues 6-170 (TRIVITSSRD…IKFLKMILEA (165 aa)) enclose the Brix domain.

Probably involved in the biogenesis of the ribosome. The chain is Probable Brix domain-containing ribosomal biogenesis protein from Saccharolobus solfataricus (strain ATCC 35092 / DSM 1617 / JCM 11322 / P2) (Sulfolobus solfataricus).